The following is a 284-amino-acid chain: Undecaprenyl-diphosphatase (284 aa).

A run of 8 helical transmembrane segments spans residues 7-27, 44-64, 90-110, 116-136, 167-187, 197-217, 229-249, and 259-279; these read IILGIIEGITEWLPISSTGHL, EMFDVVIQLGAILSVVVLYFH, LWLKVLIAALPAAIIGLPLND, FYHFVPVAFMLIIYGVAFIVI, VLSLLPGTSRSGATIVGALLI, FTFFLGIPVMFGASFIKILHF, FGVLLVACLVAFGVSMIAIKF, and FTFFGKYRIVLGIVLLIYAAF.

This sequence belongs to the UppP family.

It is found in the cell membrane. The enzyme catalyses di-trans,octa-cis-undecaprenyl diphosphate + H2O = di-trans,octa-cis-undecaprenyl phosphate + phosphate + H(+). Catalyzes the dephosphorylation of undecaprenyl diphosphate (UPP). Confers resistance to bacitracin. The polypeptide is Undecaprenyl-diphosphatase (Lactococcus lactis subsp. cremoris (strain SK11)).